The following is a 722-amino-acid chain: Bifunctional UDP-N-acetylglucosamine 2-epimerase/N-acetylmannosamine kinase (722 aa).

Positions 19, 23, 113, 220, and 253 each coordinate UDP. CMP-N-acetyl-beta-neuraminate is bound by residues Lys-259, Glu-271, Lys-280, and His-281. Val-282, Ser-301, Ser-302, Glu-307, and Arg-321 together coordinate UDP. Residues 406-722 (TLSALAVDLG…VLDYTTRRIY (317 aa)) form an N-acetylmannosamine kinase region. Mg(2+) is bound at residue Asp-413. Position 416 (Gly-416) interacts with an N-acyl-D-mannosamine 6-phosphate. Positions 417, 418, and 420 each coordinate ADP. Gly-476, Arg-477, Thr-489, Asn-516, Asp-517, and Gly-545 together coordinate an N-acyl-D-mannosamine 6-phosphate. The an N-acyl-D-mannosamine site is built by Gly-476, Arg-477, Thr-489, Asn-516, and Asp-517. The active site involves Asp-517. 2 residues coordinate an N-acyl-D-mannosamine: Glu-566 and His-569. His-569 is an an N-acyl-D-mannosamine 6-phosphate binding site. Residues His-569, Cys-579, Cys-581, and Cys-586 each contribute to the Zn(2+) site. Glu-588 contacts an N-acyl-D-mannosamine 6-phosphate. Residue Glu-588 coordinates an N-acyl-D-mannosamine.

The protein in the N-terminal section; belongs to the UDP-N-acetylglucosamine 2-epimerase family. This sequence in the C-terminal section; belongs to the ROK (NagC/XylR) family. Homodimer. Homotetramer. Homohexamer. The hexameric form exhibits both enzyme activities, whereas the dimeric form only catalyzes the phosphorylation of N-acyl-D-mannosamine. Post-translationally, phosphorylated. Phosphorylation by PKC activates the UDP-N-acetylglucosamine 2-epimerase activity. In terms of tissue distribution, highest expression in liver and placenta. Also found in heart, brain, lung, kidney, skeletal muscle and pancreas. Isoform 1 is expressed in heart, brain, kidney, liver, placenta, lung, spleen, pancreas, skeletal muscle and colon. Isoform 2 is expressed mainly in placenta, but also in brain, kidney, liver, lung, pancreas and colon. Isoform 3 is expressed at low level in kidney, liver, placenta and colon.

It localises to the cytoplasm. Its subcellular location is the cytosol. The catalysed reaction is UDP-N-acetyl-alpha-D-glucosamine + H2O = aldehydo-N-acetyl-D-mannosamine + UDP + H(+). The enzyme catalyses an N-acyl-D-mannosamine + ATP = an N-acyl-D-mannosamine 6-phosphate + ADP + H(+). Its pathway is amino-sugar metabolism; N-acetylneuraminate biosynthesis. The UDP-N-acetylglucosamine 2-epimerase activity, in contrast to the N-acetylmannosamine kinase activity, exhibits allosteric regulation by cytidine monophosphate-N-acetylneuraminic acid (CMP-Neu5Ac), the end product of neuraminic acid biosynthesis. Moreover, the activity is contingent upon the oligomeric state of the enzyme. The monomeric form is inactive, while the dimeric form selectively catalyzes the phosphorylation of N-acetylmannosamine. The hexameric form, on the other hand, demonstrates full proficiency in both enzyme activities. Furthermore, the UDP-N-acetylglucosamine 2-epimerase activity is increased by PKC-mediated phosphorylation. Its function is as follows. Bifunctional enzyme that possesses both UDP-N-acetylglucosamine 2-epimerase and N-acetylmannosamine kinase activities, and serves as the initiator of the biosynthetic pathway leading to the production of N-acetylneuraminic acid (NeuAc), a critical precursor in the synthesis of sialic acids. By catalyzing this pivotal and rate-limiting step in sialic acid biosynthesis, this enzyme assumes a pivotal role in governing the regulation of cell surface sialylation, playing a role in embryonic angiogenesis. Sialic acids represent a category of negatively charged sugars that reside on the surface of cells as terminal components of glycoconjugates and mediate important functions in various cellular processes, including cell adhesion, signal transduction, and cellular recognition. The sequence is that of Bifunctional UDP-N-acetylglucosamine 2-epimerase/N-acetylmannosamine kinase from Homo sapiens (Human).